We begin with the raw amino-acid sequence, 142 residues long: HTH-type transcriptional regulator LysM (142 aa).

One can recognise an HTH asnC-type domain in the interval 6 to 69; it reads IDESDLKILE…ELENEIRAIV (64 aa). The H-T-H motif DNA-binding region spans 25–44; that stretch reads YTLIAKELKVSEAAIRKRIE.

Homotetramer.

The protein resides in the cytoplasm. Its pathway is amino-acid biosynthesis; L-lysine biosynthesis via AAA pathway [regulation]. In terms of biological role, in the absence or at low concentrations of lysine, activates the biosynthesis of this amino acid via the alpha-aminoadipate (AAA) pathway. This chain is HTH-type transcriptional regulator LysM (lysM), found in Saccharolobus solfataricus (strain ATCC 35092 / DSM 1617 / JCM 11322 / P2) (Sulfolobus solfataricus).